The sequence spans 441 residues: Proline--tRNA ligase (441 aa).

This sequence belongs to the class-II aminoacyl-tRNA synthetase family. ProS type 2 subfamily. In terms of assembly, homodimer.

It is found in the cytoplasm. The enzyme catalyses tRNA(Pro) + L-proline + ATP = L-prolyl-tRNA(Pro) + AMP + diphosphate. Its function is as follows. Catalyzes the attachment of proline to tRNA(Pro) in a two-step reaction: proline is first activated by ATP to form Pro-AMP and then transferred to the acceptor end of tRNA(Pro). The protein is Proline--tRNA ligase of Bartonella henselae (strain ATCC 49882 / DSM 28221 / CCUG 30454 / Houston 1) (Rochalimaea henselae).